Reading from the N-terminus, the 591-residue chain is Probable sulfoacetaldehyde acetyltransferase (591 aa).

The segment at 359-383 (MDHEDDDPGTEWNVGARQREPDRMS) is disordered.

The protein belongs to the TPP enzyme family. The cofactor is Mg(2+). Requires thiamine diphosphate as cofactor.

Its subcellular location is the cytoplasm. It catalyses the reaction acetyl phosphate + sulfite + H(+) = sulfoacetaldehyde + phosphate. Its pathway is organosulfur degradation; taurine degradation via aerobic pathway; acetyl phosphate and sulfite from taurine: step 2/2. The polypeptide is Probable sulfoacetaldehyde acetyltransferase (xsc) (Rhizobium meliloti (strain 1021) (Ensifer meliloti)).